The following is a 1366-amino-acid chain: DNA-directed RNA polymerase subunit beta' (1366 aa).

Over residues M1–K20 the composition is skewed to basic residues. A disordered region spans residues M1–F37. Residues C248, C315, C322, and C325 each coordinate Zn(2+). Positions T1292–E1366 are disordered. Low complexity predominate over residues L1354–E1366.

The protein belongs to the RNA polymerase beta' chain family. RpoC2 subfamily. As to quaternary structure, in cyanobacteria the RNAP catalytic core is composed of 2 alpha, 1 beta, 1 beta', 1 gamma and 1 omega subunit. When a sigma factor is associated with the core the holoenzyme is formed, which can initiate transcription. It depends on Zn(2+) as a cofactor.

The enzyme catalyses RNA(n) + a ribonucleoside 5'-triphosphate = RNA(n+1) + diphosphate. In terms of biological role, DNA-dependent RNA polymerase catalyzes the transcription of DNA into RNA using the four ribonucleoside triphosphates as substrates. The protein is DNA-directed RNA polymerase subunit beta' of Prochlorococcus marinus (strain MIT 9215).